We begin with the raw amino-acid sequence, 135 residues long: Galectin-1 (135 aa).

A2 carries the post-translational modification N-acetylalanine. Residues 4 to 135 form the Galectin domain; it reads GLVASNLNLK…DFKIKCVAFD (132 aa). Residues K13 and K29 each carry the N6-acetyllysine modification. S30 carries the phosphoserine modification. A beta-D-galactoside is bound by residues 45–49, H53, N62, and 69–72; these read HFNPR and WGAE. An N6-acetyllysine; alternate modification is found at K108. K108 carries the N6-succinyllysine; alternate modification. K128 is modified (N6-acetyllysine).

As to quaternary structure, homodimer. Binds LGALS3BP. Interacts with CD2, CD3, CD4, CD6, CD7, CD43, ALCAM and CD45. Interacts with laminin (via poly-N-acetyllactosamine). Interacts with SUSD2. Interacts with cargo receptor TMED10; the interaction mediates the translocation from the cytoplasm into the ERGIC (endoplasmic reticulum-Golgi intermediate compartment) and thereby secretion. Post-translationally, the N-terminus is blocked.

Its subcellular location is the secreted. The protein localises to the extracellular space. It is found in the extracellular matrix. The protein resides in the cytoplasm. Its function is as follows. Lectin that binds beta-galactoside and a wide array of complex carbohydrates. Plays a role in regulating apoptosis, cell proliferation and cell differentiation. Inhibits CD45 protein phosphatase activity and therefore the dephosphorylation of Lyn kinase. Strong inducer of T-cell apoptosis. The chain is Galectin-1 from Bubalus bubalis (Domestic water buffalo).